The chain runs to 459 residues: Argininosuccinate lyase (459 aa).

Belongs to the lyase 1 family. Argininosuccinate lyase subfamily.

It localises to the cytoplasm. It catalyses the reaction 2-(N(omega)-L-arginino)succinate = fumarate + L-arginine. It functions in the pathway amino-acid biosynthesis; L-arginine biosynthesis; L-arginine from L-ornithine and carbamoyl phosphate: step 3/3. The chain is Argininosuccinate lyase from Prochlorococcus marinus (strain MIT 9301).